A 658-amino-acid chain; its full sequence is Katanin p80 WD40 repeat-containing subunit B1 (658 aa).

The interval 1 to 284 (MATPVVTKTA…VADLAICNDQ (284 aa)) is interaction with dynein. The tract at residues 1-300 (MATPVVTKTA…SQSNVSSYVV (300 aa)) is interaction with centrosomes. WD repeat units lie at residues 18-58 (AHAS…CIMS), 61-100 (GHTSPVESVRLNTPEELIVAGSQSGSIRVWDLEAAKILRT), 103-142 (GHKANICSLDFHPYGEFVASGSQDTNIKLWDIRRKGCVFR), 145-184 (GHSQAVRCLRFSPDGKWLASAADDHTVKLWDLTAGKMMSE), 187-226 (GHTGPVNVVEFHPNEYLLASGSSDRTIRFWDLEKFQVVSC), and 229-269 (GEPG…DVVL). Positions 285–437 (LIGVAFSQSN…LPQLPVPNLE (153 aa)) are interaction with PAFAH1B1. The span at 311–329 (VTQDPVQANQPLTQQTPNP) shows a compositional bias: polar residues. Disordered regions lie at residues 311–419 (VTQD…EVSK) and 434–458 (PNLEVPARPSVMTSTPAPKGEPDII). Positions 352 to 374 (HNSESERRSPSSEDDRDERESRA) are enriched in basic and acidic residues. Residue Thr-395 is modified to Phosphothreonine. Residues 436–658 (LEVPARPSVM…ELHLLMASLD (223 aa)) are interaction with KATNA1 and NDEL1.

The protein belongs to the WD repeat KATNB1 family. In terms of assembly, interacts with KATNA1. This interaction enhances the microtubule binding and severing activity of KATNA1 and also targets this activity to the centrosome. This interaction is weakly competed by KATNBL1 which has a lower affinity for it. Interacts with ASPM; the katanin complex formation KATNA1:KATNB1 is required for the association of ASPM. Interacts with dynein, microtubules, NDEL1 and PAFAH1B1. Interacts with KATNAL1; this interaction is weakly competed by KATNBL1 which has a lower affinity for it. Interacts with CAMSAP2 and CAMSAP3; leading to regulate the length of CAMSAP-decorated microtubule stretches.

The protein resides in the cytoplasm. Its subcellular location is the cytoskeleton. It is found in the microtubule organizing center. The protein localises to the centrosome. It localises to the spindle pole. The protein resides in the spindle. Its function is as follows. Participates in a complex which severs microtubules in an ATP-dependent manner. May act to target the enzymatic subunit of this complex to sites of action such as the centrosome. Microtubule severing may promote rapid reorganization of cellular microtubule arrays and the release of microtubules from the centrosome following nucleation. Microtubule release from the mitotic spindle poles may allow depolymerization of the microtubule end proximal to the spindle pole, leading to poleward microtubule flux and poleward motion of chromosome. The function in regulating microtubule dynamics at spindle poles seems to depend on the association of the katanin KATNA1:KATNB1 complex with ASPM which recruits it to microtubules. Reversely KATNA1:KATNB1 can enhance ASPM blocking activity on microtubule minus-end growth. Microtubule release within the cell body of neurons may be required for their transport into neuronal processes by microtubule-dependent motor proteins. This transport is required for axonal growth. The polypeptide is Katanin p80 WD40 repeat-containing subunit B1 (Katnb1) (Mus musculus (Mouse)).